Consider the following 188-residue polypeptide: dCTP deaminase (188 aa).

DCTP is bound by residues 111–116, 135–137, glutamine 156, tyrosine 170, and glutamine 180; these read KSTYAR and TLE. Glutamate 137 acts as the Proton donor/acceptor in catalysis.

The protein belongs to the dCTP deaminase family. Homotrimer.

It carries out the reaction dCTP + H2O + H(+) = dUTP + NH4(+). The protein operates within pyrimidine metabolism; dUMP biosynthesis; dUMP from dCTP (dUTP route): step 1/2. Catalyzes the deamination of dCTP to dUTP. The polypeptide is dCTP deaminase (Coxiella burnetii (strain CbuK_Q154) (Coxiella burnetii (strain Q154))).